A 376-amino-acid chain; its full sequence is UDP-4-amino-4,6-dideoxy-N-acetyl-beta-L-altrosamine transaminase (376 aa).

Residues Y4, 24–27 (EILT), A54, and S176 each bind substrate. K181 bears the N6-(pyridoxal phosphate)lysine mark. Residues N226 and 311–314 (QVHY) contribute to the substrate site.

Belongs to the DegT/DnrJ/EryC1 family.

The enzyme catalyses UDP-4-amino-4,6-dideoxy-N-acetyl-beta-L-altrosamine + 2-oxoglutarate = UDP-2-acetamido-2,6-dideoxy-beta-L-arabino-hex-4-ulose + L-glutamate. Its function is as follows. Catalyzes the second step in the biosynthesis of pseudaminic acid, a sialic-acid-like sugar that is used to modify flagellin. Uses UDP-2-acetamido-2,6-dideoxy-beta-L-arabino-4-hexulose as substrate producing UDP-4-amino-4,6-dideoxy-beta-L-AltNAc. This Campylobacter jejuni subsp. jejuni serotype O:23/36 (strain 81-176) protein is UDP-4-amino-4,6-dideoxy-N-acetyl-beta-L-altrosamine transaminase (pseC).